Here is a 387-residue protein sequence, read N- to C-terminus: Succinate--CoA ligase [ADP-forming] subunit beta (387 aa).

Residues 9–245 (KDLLESYGLK…KSQENAKELK (237 aa)) form the ATP-grasp domain. Residues Lys46, 53–55 (GRG), Glu100, Tyr103, and Glu108 each bind ATP. Mg(2+)-binding residues include Asn200 and Asp214. Residues Asn265 and 322-324 (GIV) each bind substrate.

It belongs to the succinate/malate CoA ligase beta subunit family. As to quaternary structure, heterotetramer of two alpha and two beta subunits. The cofactor is Mg(2+).

It catalyses the reaction succinate + ATP + CoA = succinyl-CoA + ADP + phosphate. It carries out the reaction GTP + succinate + CoA = succinyl-CoA + GDP + phosphate. It functions in the pathway carbohydrate metabolism; tricarboxylic acid cycle; succinate from succinyl-CoA (ligase route): step 1/1. In terms of biological role, succinyl-CoA synthetase functions in the citric acid cycle (TCA), coupling the hydrolysis of succinyl-CoA to the synthesis of either ATP or GTP and thus represents the only step of substrate-level phosphorylation in the TCA. The beta subunit provides nucleotide specificity of the enzyme and binds the substrate succinate, while the binding sites for coenzyme A and phosphate are found in the alpha subunit. In Francisella tularensis subsp. holarctica (strain FTNF002-00 / FTA), this protein is Succinate--CoA ligase [ADP-forming] subunit beta.